The chain runs to 495 residues: uncharacterized protein (495 aa).

The region spanning 16-74 (SSKRGDLIELAVTALDEDGNGIGTHDGTNVHVIGALPDERVRARLTHVGKRHLHAEAVE) is the TRAM domain. Cysteine 88, cysteine 94, cysteine 97, and cysteine 175 together coordinate [4Fe-4S] cluster. The S-adenosyl-L-methionine site is built by glutamine 299, tyrosine 328, glutamate 349, and asparagine 397. The active-site Nucleophile is cysteine 424. Residues 472–483 (DRLESPAKERSR) show a composition bias toward basic and acidic residues. Residues 472–495 (DRLESPAKERSRPRASHKAKGGAV) form a disordered region. A compositionally biased stretch (basic residues) spans 484 to 495 (PRASHKAKGGAV).

This sequence belongs to the class I-like SAM-binding methyltransferase superfamily. RNA M5U methyltransferase family.

This is an uncharacterized protein from Geobacter sulfurreducens (strain ATCC 51573 / DSM 12127 / PCA).